A 182-amino-acid polypeptide reads, in one-letter code: Large ribosomal subunit protein uL16 (182 aa).

Belongs to the universal ribosomal protein uL16 family.

The chain is Large ribosomal subunit protein uL16 from Pyrobaculum neutrophilum (strain DSM 2338 / JCM 9278 / NBRC 100436 / V24Sta) (Thermoproteus neutrophilus).